Here is a 310-residue protein sequence, read N- to C-terminus: Methionyl-tRNA formyltransferase (310 aa).

109–112 (SLLP) lines the (6S)-5,6,7,8-tetrahydrofolate pocket.

This sequence belongs to the Fmt family.

The enzyme catalyses L-methionyl-tRNA(fMet) + (6R)-10-formyltetrahydrofolate = N-formyl-L-methionyl-tRNA(fMet) + (6S)-5,6,7,8-tetrahydrofolate + H(+). Attaches a formyl group to the free amino group of methionyl-tRNA(fMet). The formyl group appears to play a dual role in the initiator identity of N-formylmethionyl-tRNA by promoting its recognition by IF2 and preventing the misappropriation of this tRNA by the elongation apparatus. In Pseudomonas putida (strain ATCC 47054 / DSM 6125 / CFBP 8728 / NCIMB 11950 / KT2440), this protein is Methionyl-tRNA formyltransferase.